Consider the following 94-residue polypeptide: Selenoprotein K (94 aa).

A helical membrane pass occupies residues 20 to 42 (LSFITDFFWGIAEFVVFFFKTLL). The interval 48–94 (KRRGYGGSSDSRYDDGRGPPGNPPRRMGRISHLRGPSPPPMAGGUGR) is disordered. Residue selenocysteine 92 is a non-standard amino acid, selenocysteine.

Belongs to the selenoprotein K family. As to quaternary structure, interacts with DERL1, DERL2, DERL3 and SELENOS. The SELENOK-SELENOS complex interacts with VCP. Interacts with ZDHHC6. Cleaved by CAPN2/m-calpain in resting macrophages but not in activated macrophages. Macrophage activation up-regulates expression of the calpain inhibitor CAST/calpastatin, resulting in inhibition of CAPN2 activity. In terms of processing, truncated SELENOK proteins produced by failed UGA/Sec decoding are ubiquitinated by the CRL2(KLHDC2) complex, which recognizes the diglycine (Gly-Gly) at the C-terminus of truncated SELENOK proteins.

It localises to the endoplasmic reticulum membrane. Its subcellular location is the cell membrane. In terms of biological role, required for Ca(2+) flux in immune cells and plays a role in T-cell proliferation and in T-cell and neutrophil migration. Involved in endoplasmic reticulum-associated degradation (ERAD) of soluble glycosylated proteins. Required for palmitoylation and cell surface expression of CD36 and involved in macrophage uptake of low-density lipoprotein and in foam cell formation. Together with ZDHHC6, required for palmitoylation of ITPR1 in immune cells, leading to regulate ITPR1 stability and function. Plays a role in protection of cells from ER stress-induced apoptosis. Protects cells from oxidative stress when overexpressed in cardiomyocytes. In Rattus norvegicus (Rat), this protein is Selenoprotein K.